Reading from the N-terminus, the 424-residue chain is UPF0053 protein MG146 (424 aa).

One can recognise a CNNM transmembrane domain in the interval 6 to 191; that stretch reads SGLTLTVIIL…EQNGLFSKED (186 aa). The next 4 helical transmembrane spans lie at 7-27, 71-91, 101-121, and 135-155; these read GLTLTVIILSIILLAFISTVV, LITILITNNIVAIMVSNILFL, LLSSVLNLVVSGVLIVSFCEI, and LVLFAYLVYFFYLIFWPITKL. CBS domains lie at 210–270 and 272–332; these read MIKW…PKSL and LNQL…IYDE.

Belongs to the UPF0053 family.

The protein localises to the cell membrane. The protein is UPF0053 protein MG146 of Mycoplasma genitalium (strain ATCC 33530 / DSM 19775 / NCTC 10195 / G37) (Mycoplasmoides genitalium).